The following is a 194-amino-acid chain: Peptidyl-tRNA hydrolase (194 aa).

Tyrosine 21 lines the tRNA pocket. Histidine 26 functions as the Proton acceptor in the catalytic mechanism. Residues tyrosine 72, asparagine 74, and asparagine 120 each coordinate tRNA.

The protein belongs to the PTH family. In terms of assembly, monomer.

The protein resides in the cytoplasm. The catalysed reaction is an N-acyl-L-alpha-aminoacyl-tRNA + H2O = an N-acyl-L-amino acid + a tRNA + H(+). Hydrolyzes ribosome-free peptidyl-tRNAs (with 1 or more amino acids incorporated), which drop off the ribosome during protein synthesis, or as a result of ribosome stalling. In terms of biological role, catalyzes the release of premature peptidyl moieties from peptidyl-tRNA molecules trapped in stalled 50S ribosomal subunits, and thus maintains levels of free tRNAs and 50S ribosomes. The protein is Peptidyl-tRNA hydrolase of Halorhodospira halophila (strain DSM 244 / SL1) (Ectothiorhodospira halophila (strain DSM 244 / SL1)).